The primary structure comprises 792 residues: Probable exo-1,4-beta-xylosidase xlnD (792 aa).

The first 20 residues, 1–20, serve as a signal peptide directing secretion; that stretch reads MSVAKSIAAVLVALLPGALA. N-linked (GlcNAc...) asparagine glycosylation is found at Asn-23, Asn-87, Asn-118, Asn-142, and Asn-246. Asp-310 is an active-site residue. N-linked (GlcNAc...) asparagine glycosylation is found at Asn-326, Asn-385, Asn-404, Asn-440, Asn-477, Asn-518, Asn-679, and Asn-701.

This sequence belongs to the glycosyl hydrolase 3 family.

The protein resides in the secreted. It carries out the reaction Hydrolysis of (1-&gt;4)-beta-D-xylans, to remove successive D-xylose residues from the non-reducing termini.. Its pathway is glycan degradation; xylan degradation. Functionally, xylan 1,4-beta-xylosidase involved in the hydrolysis of xylan, a major structural heterogeneous polysaccharide found in plant biomass representing the second most abundant polysaccharide in the biosphere, after cellulose. This chain is Probable exo-1,4-beta-xylosidase xlnD (xlnD), found in Aspergillus fumigatus (strain ATCC MYA-4609 / CBS 101355 / FGSC A1100 / Af293) (Neosartorya fumigata).